A 183-amino-acid polypeptide reads, in one-letter code: ATP synthase subunit delta (183 aa).

This sequence belongs to the ATPase delta chain family. As to quaternary structure, F-type ATPases have 2 components, F(1) - the catalytic core - and F(0) - the membrane proton channel. F(1) has five subunits: alpha(3), beta(3), gamma(1), delta(1), epsilon(1). CF(0) has four main subunits: a(1), b(1), b'(1) and c(10-14). The alpha and beta chains form an alternating ring which encloses part of the gamma chain. F(1) is attached to F(0) by a central stalk formed by the gamma and epsilon chains, while a peripheral stalk is formed by the delta, b and b' chains.

The protein resides in the cellular thylakoid membrane. In terms of biological role, f(1)F(0) ATP synthase produces ATP from ADP in the presence of a proton or sodium gradient. F-type ATPases consist of two structural domains, F(1) containing the extramembraneous catalytic core and F(0) containing the membrane proton channel, linked together by a central stalk and a peripheral stalk. During catalysis, ATP synthesis in the catalytic domain of F(1) is coupled via a rotary mechanism of the central stalk subunits to proton translocation. Functionally, this protein is part of the stalk that links CF(0) to CF(1). It either transmits conformational changes from CF(0) to CF(1) or is implicated in proton conduction. This chain is ATP synthase subunit delta, found in Nostoc sp. (strain PCC 7120 / SAG 25.82 / UTEX 2576).